We begin with the raw amino-acid sequence, 143 residues long: Nucleoside diphosphate kinase (143 aa).

ATP contacts are provided by lysine 11, phenylalanine 59, arginine 87, threonine 93, arginine 104, and asparagine 114. The Pros-phosphohistidine intermediate role is filled by histidine 117.

The protein belongs to the NDK family. As to quaternary structure, homotetramer. Mg(2+) serves as cofactor.

It is found in the cytoplasm. It catalyses the reaction a 2'-deoxyribonucleoside 5'-diphosphate + ATP = a 2'-deoxyribonucleoside 5'-triphosphate + ADP. The catalysed reaction is a ribonucleoside 5'-diphosphate + ATP = a ribonucleoside 5'-triphosphate + ADP. In terms of biological role, major role in the synthesis of nucleoside triphosphates other than ATP. The ATP gamma phosphate is transferred to the NDP beta phosphate via a ping-pong mechanism, using a phosphorylated active-site intermediate. This is Nucleoside diphosphate kinase from Psychrobacter cryohalolentis (strain ATCC BAA-1226 / DSM 17306 / VKM B-2378 / K5).